The primary structure comprises 325 residues: Elongation factor P--(R)-beta-lysine ligase (325 aa).

76–78 is a binding site for substrate; the sequence is SPE. ATP-binding positions include 100-102 and Asn-109; that span reads RNE. Position 118 (Tyr-118) interacts with substrate. An ATP-binding site is contributed by 244–245; sequence EL. Substrate is bound at residue Glu-251. Gly-300 contributes to the ATP binding site.

This sequence belongs to the class-II aminoacyl-tRNA synthetase family. EpmA subfamily. Homodimer.

The catalysed reaction is D-beta-lysine + L-lysyl-[protein] + ATP = N(6)-((3R)-3,6-diaminohexanoyl)-L-lysyl-[protein] + AMP + diphosphate + H(+). Its function is as follows. With EpmB is involved in the beta-lysylation step of the post-translational modification of translation elongation factor P (EF-P) on 'Lys-34'. Catalyzes the ATP-dependent activation of (R)-beta-lysine produced by EpmB, forming a lysyl-adenylate, from which the beta-lysyl moiety is then transferred to the epsilon-amino group of EF-P 'Lys-34'. The protein is Elongation factor P--(R)-beta-lysine ligase of Salmonella choleraesuis (strain SC-B67).